An 830-amino-acid polypeptide reads, in one-letter code: Frameshifted structural polyprotein (830 aa).

Residues 58-109 form a disordered region; the sequence is AIAPARPPKPKKKKTTKPKPKTQPKKINGKTQQQKKKDKQADKKKKKPGKRE. Basic residues predominate over residues 65-107; that stretch reads PKPKKKKTTKPKPKTQPKKINGKTQQQKKKDKQADKKKKKPGK. Positions 94-106 are ribosome-binding; the sequence is KDKQADKKKKKPG. C119 and C134 are disulfide-bonded. One can recognise a Peptidase S3 domain in the interval 119 to 267; that stretch reads CIFEVKHEGK…RVTPEGSEEW (149 aa). Residues H145, D167, and S219 each act as charge relay system in the active site. N280, N327, N533, and N595 each carry an N-linked (GlcNAc...) asparagine; by host glycan. Residues 702–722 form a helical membrane-spanning segment; sequence AVVGMSLLALISIFASCYMLV. S-palmitoyl cysteine; by host attachment occurs at residues C718, C728, C748, and C749. Residues 728-748 are transient transmembrane before p62-6K protein processing; it reads CLTPYALTPGAAVPWTLGILC. The next 2 helical transmembrane spans lie at 771–791 and 793–813; these read ALFWLEFAAPVACILIITYCL and NVLCCCKSLSFLSATEPRGHR.

In terms of assembly, homodimer. Homomultimer. Interacts with host karyopherin KPNA4; this interaction allows the nuclear import of the viral capsid protein. Precursor of protein E3/E2: The precursor of protein E3/E2 and E1 form a heterodimer shortly after synthesis. Interacts with host IRAK1; the interaction leads to inhibition of IRAK1-dependent signaling. Processing of the precursor of protein E3/E2 into E2 and E3 results in a heterodimer of the spike glycoproteins E2 and E1. Spike at virion surface are constituted of three E2-E1 heterodimers. Interacts with 6K protein. Interacts with host MXRA8; this interaction mediates virus entry. Post-translationally, specific enzymatic cleavages in vivo yield mature proteins. Capsid protein is auto-cleaved during polyprotein translation, unmasking a signal peptide at the N-terminus of the precursor of E3/E2. The remaining polyprotein is then targeted to the host endoplasmic reticulum, where host signal peptidase cleaves it into pE2 and TF. pE2 is further processed to mature E3 and E2 by host furin in trans-Golgi vesicle.

Its subcellular location is the virion. It is found in the host cytoplasm. The protein resides in the host cell membrane. It localises to the host nucleus. The protein localises to the virion membrane. It catalyses the reaction Autocatalytic release of the core protein from the N-terminus of the togavirus structural polyprotein by hydrolysis of a -Trp-|-Ser- bond.. In terms of biological role, forms an icosahedral capsid with a T=4 symmetry composed of 240 copies of the capsid protein surrounded by a lipid membrane through which penetrate 80 spikes composed of trimers of E1-E2 heterodimers. The capsid protein binds to the viral RNA genome at a site adjacent to a ribosome binding site for viral genome translation following genome release. Possesses a protease activity that results in its autocatalytic cleavage from the nascent structural protein. Following its self-cleavage, the capsid protein transiently associates with ribosomes, and within several minutes the protein binds to viral RNA and rapidly assembles into icosahedric core particles. The resulting nucleocapsid eventually associates with the cytoplasmic domain of the spike glycoprotein E2 at the cell membrane, leading to budding and formation of mature virions. In case of infection, new virions attach to target cells and after clathrin-mediated endocytosis their membrane fuses with the host endosomal membrane. This leads to the release of the nucleocapsid into the cytoplasm, followed by an uncoating event necessary for the genomic RNA to become accessible. The uncoating might be triggered by the interaction of capsid proteins with ribosomes. Binding of ribosomes would release the genomic RNA since the same region is genomic RNA-binding and ribosome-binding. Specifically inhibits interleukin-1 receptor-associated kinase 1/IRAK1-dependent signaling during viral entry, representing a means by which the alphaviruses may evade innate immune detection and activation prior to viral gene expression. Functionally, provides the signal sequence for p62 (E3/E2) translocation to the host endoplasmic reticulum. Mediates pH protection of E1 during secretory pathway trans- port. Its function is as follows. Plays a role in viral attachment to target host cell, by binding to the cell receptor. Synthesized as a p62 precursor which is processed by furin at the cell membrane just before virion budding, giving rise to E2-E1 heterodimer. The p62-E1 heterodimer is stable, whereas E2-E1 is unstable and dissociate at low pH. p62 is processed at the last step, presumably to avoid E1 fusion activation before its final export to cell surface. E2 C-terminus contains a transitory transmembrane that would be disrupted by palmitoylation, resulting in reorientation of the C-terminal tail from lumenal to cytoplasmic side. This step is critical since E2 C-terminus is involved in budding by interacting with capsid proteins. This release of E2 C-terminus in cytoplasm occurs lately in protein export, and precludes premature assembly of particles at the endoplasmic reticulum membrane. Virion component that may play a role during viral assembly. In Aedes (Middle-African hedgehog), this protein is Frameshifted structural polyprotein.